Here is a 63-residue protein sequence, read N- to C-terminus: MAKPGARIIITLECTECRTNTAKRRPGVSRYTTTKNKRNTTGRMELKKFCPNCNKHTVHKETK.

This sequence belongs to the bacterial ribosomal protein bL33 family.

The polypeptide is Large ribosomal subunit protein bL33 (Gloeobacter violaceus (strain ATCC 29082 / PCC 7421)).